Reading from the N-terminus, the 159-residue chain is Transcriptional repressor NrdR (159 aa).

The segment at 3 to 34 (CPFCRHEDTQVVDSRVSEDGAAIRRRRRCSAC) is a zinc-finger region. Residues 49–139 (PAVVKKDGSR…VYRRFEDVSE (91 aa)) form the ATP-cone domain.

It belongs to the NrdR family. Zn(2+) serves as cofactor.

Negatively regulates transcription of bacterial ribonucleotide reductase nrd genes and operons by binding to NrdR-boxes. The protein is Transcriptional repressor NrdR of Burkholderia ambifaria (strain MC40-6).